Here is a 208-residue protein sequence, read N- to C-terminus: MGGKWSKSSIVGWPAIRERMRRTPPTPPAAEGVGAVSQDLERRGAITSSNTRANNPDLAWLEAQEEDEVGFPVRPQVPLRPMTYKGAVDLSHFLKEKGGLEGLIYSKRRQEILDLWVYHTQGYFPDWQNYTPGPGIRYPLTMGWCFKLVPVDPEEVEKANEGENNCLLHPMSQHGMEDEDKEVLKWEFDSRLALRHIARERHPEYYQD.

G2 is lipidated: N-myristoyl glycine; by host. The residue at position 6 (S6) is a Phosphoserine; by host. The segment at 16 to 51 (IRERMRRTPPTPPAAEGVGAVSQDLERRGAITSSNT) is disordered. The interval 65–68 (EEDE) is acidic; interacts with host PACS1 and PACS2; stabilizes the interaction of NEF/MHC-I with host AP1M1; necessary for MHC-I internalization. The interval 72 to 81 (PVRPQVPLRP) is SH3-binding; interaction with Src family tyrosine kinases. The short motif at 75 to 78 (PQVP) is the PxxP; stabilizes the interaction of NEF/MHC-I with host AP1M1; necessary for MHC-I internalization element. A mediates dimerization, Nef-PTE1 interaction region spans residues 111–127 (EILDLWVYHTQGYFPDW). Residues 151–183 (VDPEEVEKANEGENNCLLHPMSQHGMEDEDKEV) form a binding to ATP6V1H region. The Dileucine internalization motif; necessary for CD4 internalization signature appears at 167 to 168 (LL). Residues 177 to 178 (ED) carry the Diacidic; necessary for CD4 internalization motif.

The protein belongs to the lentivirus primate group Nef protein family. As to quaternary structure, monomer; cytosolic form. Homodimer; membrane bound form. Interacts with Nef associated p21-activated kinase (PAK2); this interaction activates PAK2. Associates with the Nef-MHC-I-AP1 complex; this complex is required for MHC-I internalization. Interacts (via C-terminus) with host PI3-kinase. Interacts with host PACS1; this interaction seems to be weak. Interacts with host PACS2. Interacts with host LCK and MAPK3; these interactions inhibit the kinase activity of the latter. Interacts with host ATP6V1H; this interaction may play a role in CD4 endocytosis. Associates with the CD4-Nef-AP2 complex; this complex is required for CD4 internalization. Interacts with host AP2 subunit alpha and AP2 subunit sigma2. Interacts with TCR-zeta chain; this interaction up-regulates the Fas ligand (FasL) surface expression. Interacts with host HCK, LYN, and SRC; these interactions activate the Src family kinases. Interacts with MAP3K5; this interaction inhibits the Fas and TNFR-mediated death signals. Interacts with beta-COP and PTE1. Interacts with human RACK1; this increases Nef phosphorylation by PKC. Interacts with TP53; this interaction decreases the half-life of TP53, protecting the infected cell against p53-mediated apoptosis. In terms of processing, the virion-associated Nef proteins are cleaved by the viral protease to release the soluble C-terminal core protein. Nef is probably cleaved concomitantly with viral structural proteins on maturation of virus particles. Myristoylated. Post-translationally, phosphorylated on serine residues, probably by host PKCdelta and theta.

It localises to the host cell membrane. The protein resides in the virion. It is found in the secreted. Its subcellular location is the host Golgi apparatus membrane. Factor of infectivity and pathogenicity, required for optimal virus replication. Alters numerous pathways of T-lymphocyte function and down-regulates immunity surface molecules in order to evade host defense and increase viral infectivity. Alters the functionality of other immunity cells, like dendritic cells, monocytes/macrophages and NK cells. In terms of biological role, in infected CD4(+) T-lymphocytes, down-regulates the surface MHC-I, mature MHC-II, CD4, CD28, CCR5 and CXCR4 molecules. Mediates internalization and degradation of host CD4 through the interaction of with the cytoplasmic tail of CD4, the recruitment of AP-2 (clathrin adapter protein complex 2), internalization through clathrin coated pits, and subsequent transport to endosomes and lysosomes for degradation. Diverts host MHC-I molecules to the trans-Golgi network-associated endosomal compartments by an endocytic pathway to finally target them for degradation. MHC-I down-regulation may involve AP-1 (clathrin adapter protein complex 1) or possibly Src family kinase-ZAP70/Syk-PI3K cascade recruited by PACS2. In consequence infected cells are masked for immune recognition by cytotoxic T-lymphocytes. Decreasing the number of immune receptors also prevents reinfection by more HIV particles (superinfection). Down-regulates host SERINC3 and SERINC5 thereby excluding these proteins from the viral particles. Virion infectivity is drastically higher when SERINC3 or SERINC5 are excluded from the viral envelope, because these host antiviral proteins impair the membrane fusion event necessary for subsequent virion penetration. Its function is as follows. Bypasses host T-cell signaling by inducing a transcriptional program nearly identical to that of anti-CD3 cell activation. Interaction with TCR-zeta chain up-regulates the Fas ligand (FasL). Increasing surface FasL molecules and decreasing surface MHC-I molecules on infected CD4(+) cells send attacking cytotoxic CD8+ T-lymphocytes into apoptosis. Functionally, plays a role in optimizing the host cell environment for viral replication without causing cell death by apoptosis. Protects the infected cells from apoptosis in order to keep them alive until the next virus generation is ready to strike. Inhibits the Fas and TNFR-mediated death signals by blocking MAP3K5/ASK1. Decreases the half-life of TP53, protecting the infected cell against p53-mediated apoptosis. Inhibits the apoptotic signals regulated by the Bcl-2 family proteins through the formation of a Nef/PI3-kinase/PAK2 complex that leads to activation of PAK2 and induces phosphorylation of host BAD. Extracellular Nef protein targets CD4(+) T-lymphocytes for apoptosis by interacting with CXCR4 surface receptors. The polypeptide is Protein Nef (Human immunodeficiency virus type 1 group M subtype F1 (isolate 93BR020) (HIV-1)).